Reading from the N-terminus, the 382-residue chain is MNLKEKTRALFAEIFSYPATHTIQAPGRVNLIGEHTDYNDGFVLPCAIDYQTVISCAPRNDRTVRVIAADYDNQVEEFSLDAPIVTHDSQQWSNYVRGVVKHLQQRNNAFGGVDMVISGNVPQGAGLSSSASLEVAVGTVFQQLYHLPLDGAQIALNGQEAENQFVGCNCGIMDQLISALGKKDHALLIDCRTLGAKAVSMPKGVAVVIINSNFKRTLVGSEYNTRREQCETGARFFQQPALRDVSLEAFNAVASELDPVVAKRVRHVLSENARTVEAASALEKGDLQRMGQLMAESHASMRDDFEITVPQIDTLVDIVKATIGDQGGVRMTGGGFGGCVVALIPEDLVPAVRQAVAQQYEAKTGIKETFYVCKPSQGAGQC.

34 to 37 (EHTD) contributes to the substrate binding site. Residue 124–130 (GAGLSSS) participates in ATP binding. Mg(2+)-binding residues include S130 and E162. The active-site Proton acceptor is the D174. Position 223 (Y223) interacts with substrate.

This sequence belongs to the GHMP kinase family. GalK subfamily.

The protein localises to the cytoplasm. It catalyses the reaction alpha-D-galactose + ATP = alpha-D-galactose 1-phosphate + ADP + H(+). It functions in the pathway carbohydrate metabolism; galactose metabolism. Catalyzes the transfer of the gamma-phosphate of ATP to D-galactose to form alpha-D-galactose-1-phosphate (Gal-1-P). This chain is Galactokinase, found in Salmonella paratyphi C (strain RKS4594).